Reading from the N-terminus, the 344-residue chain is GTP 3',8-cyclase (344 aa).

One can recognise a Radical SAM core domain in the interval proline 19–aspartate 239. Arginine 28 contacts GTP. The [4Fe-4S] cluster site is built by cysteine 35 and cysteine 39. Tyrosine 41 is a binding site for S-adenosyl-L-methionine. Residue cysteine 42 coordinates [4Fe-4S] cluster. Arginine 77 serves as a coordination point for GTP. Residue glycine 81 coordinates S-adenosyl-L-methionine. Threonine 111 provides a ligand contact to GTP. Residue serine 135 participates in S-adenosyl-L-methionine binding. Position 171 (lysine 171) interacts with GTP. Methionine 205 contacts S-adenosyl-L-methionine. [4Fe-4S] cluster contacts are provided by cysteine 268 and cysteine 271. Arginine 273–arginine 275 provides a ligand contact to GTP. Cysteine 285 contacts [4Fe-4S] cluster.

It belongs to the radical SAM superfamily. MoaA family. As to quaternary structure, monomer and homodimer. [4Fe-4S] cluster serves as cofactor.

It catalyses the reaction GTP + AH2 + S-adenosyl-L-methionine = (8S)-3',8-cyclo-7,8-dihydroguanosine 5'-triphosphate + 5'-deoxyadenosine + L-methionine + A + H(+). The protein operates within cofactor biosynthesis; molybdopterin biosynthesis. Functionally, catalyzes the cyclization of GTP to (8S)-3',8-cyclo-7,8-dihydroguanosine 5'-triphosphate. The protein is GTP 3',8-cyclase of Rhodopseudomonas palustris (strain TIE-1).